The following is a 439-amino-acid chain: L-cysteine:1D-myo-inositol 2-amino-2-deoxy-alpha-D-glucopyranoside ligase 2 (439 aa).

C60 serves as a coordination point for Zn(2+). Residues 60–63 (CGIT), T75, and 98–100 (NVT) contribute to the L-cysteinyl-5'-AMP site. The 'HIGH' region signature appears at 62 to 72 (ITPYDSTHLGH). Positions 203–208 (ERGGDP) match the 'ERGGDP' region motif. An L-cysteinyl-5'-AMP-binding site is contributed by W243. C247 contributes to the Zn(2+) binding site. 265 to 267 (GVD) is an L-cysteinyl-5'-AMP binding site. H272 is a binding site for Zn(2+). An L-cysteinyl-5'-AMP-binding site is contributed by I299. The 'KMSKS' region signature appears at 305 to 309 (KMSKS).

The protein belongs to the class-I aminoacyl-tRNA synthetase family. MshC subfamily. As to quaternary structure, monomer. Zn(2+) serves as cofactor.

The enzyme catalyses 1D-myo-inositol 2-amino-2-deoxy-alpha-D-glucopyranoside + L-cysteine + ATP = 1D-myo-inositol 2-(L-cysteinylamino)-2-deoxy-alpha-D-glucopyranoside + AMP + diphosphate + H(+). Functionally, catalyzes the ATP-dependent condensation of GlcN-Ins and L-cysteine to form L-Cys-GlcN-Ins. The chain is L-cysteine:1D-myo-inositol 2-amino-2-deoxy-alpha-D-glucopyranoside ligase 2 from Corynebacterium urealyticum (strain ATCC 43042 / DSM 7109).